Consider the following 353-residue polypeptide: Photosystem II D2 protein (353 aa).

The residue at position 2 (T2) is an N-acetylthreonine. T2 carries the post-translational modification Phosphothreonine. Residues 41-61 (TAYFALGGWFTGTTFVTSWYT) traverse the membrane as a helical segment. H118 is a chlorophyll a binding site. Residues 125-141 (GFMLRQFELARSVQLRP) form a helical membrane-spanning segment. Pheophytin a contacts are provided by Q130 and N143. A helical membrane pass occupies residues 153–166 (VFVSVFLIYPLGQS). Position 198 (H198) interacts with chlorophyll a. The chain crosses the membrane as a helical span at residues 208 to 228 (AALLCAIHGATVENTLFEDGD). A plastoquinone contacts are provided by H215 and F262. H215 contacts Fe cation. Residue H269 coordinates Fe cation. Residues 279-295 (GLWMSAIGVVGLALNLR) form a helical membrane-spanning segment.

This sequence belongs to the reaction center PufL/M/PsbA/D family. As to quaternary structure, PSII is composed of 1 copy each of membrane proteins PsbA, PsbB, PsbC, PsbD, PsbE, PsbF, PsbH, PsbI, PsbJ, PsbK, PsbL, PsbM, PsbT, PsbX, PsbY, PsbZ, Psb30/Ycf12, at least 3 peripheral proteins of the oxygen-evolving complex and a large number of cofactors. It forms dimeric complexes. The D1/D2 heterodimer binds P680, chlorophylls that are the primary electron donor of PSII, and subsequent electron acceptors. It shares a non-heme iron and each subunit binds pheophytin, quinone, additional chlorophylls, carotenoids and lipids. There is also a Cl(-1) ion associated with D1 and D2, which is required for oxygen evolution. The PSII complex binds additional chlorophylls, carotenoids and specific lipids. is required as a cofactor.

The protein localises to the plastid. It localises to the chloroplast thylakoid membrane. It carries out the reaction 2 a plastoquinone + 4 hnu + 2 H2O = 2 a plastoquinol + O2. In terms of biological role, photosystem II (PSII) is a light-driven water:plastoquinone oxidoreductase that uses light energy to abstract electrons from H(2)O, generating O(2) and a proton gradient subsequently used for ATP formation. It consists of a core antenna complex that captures photons, and an electron transfer chain that converts photonic excitation into a charge separation. The D1/D2 (PsbA/PsbD) reaction center heterodimer binds P680, the primary electron donor of PSII as well as several subsequent electron acceptors. D2 is needed for assembly of a stable PSII complex. The chain is Photosystem II D2 protein from Adiantum capillus-veneris (Maidenhair fern).